Here is a 199-residue protein sequence, read N- to C-terminus: Small ribosomal subunit protein uS14m (199 aa).

The interval 28–67 (LSTPAPEPAKPSSEETTESTEPATSVEDAGEPMKEKRITQ) is disordered.

This sequence belongs to the universal ribosomal protein uS14 family. In terms of assembly, component of the mitochondrial ribosome small subunit (28S) which comprises a 12S rRNA and about 30 distinct proteins. Interacts with LIAT1.

It is found in the mitochondrion. This is Small ribosomal subunit protein uS14m (mrps-14) from Caenorhabditis elegans.